Reading from the N-terminus, the 407-residue chain is Elongation factor Tu, chloroplastic (407 aa).

Residues 10 to 212 enclose the tr-type G domain; sequence KPHVNIGTIG…SVDNYIPAPE (203 aa). The tract at residues 19 to 26 is G1; it reads GHVDHGKT. 19–26 provides a ligand contact to GTP; the sequence is GHVDHGKT. Thr-26 is a binding site for Mg(2+). Positions 59 to 63 are G2; the sequence is GITIN. A G3 region spans residues 80–83; it reads DCPG. GTP-binding positions include 80–84 and 135–138; these read DCPGH and NKAD. The G4 stretch occupies residues 135–138; sequence NKAD. The segment at 173–175 is G5; the sequence is SAL.

Belongs to the TRAFAC class translation factor GTPase superfamily. Classic translation factor GTPase family. EF-Tu/EF-1A subfamily.

The protein resides in the plastid. It is found in the chloroplast. It carries out the reaction GTP + H2O = GDP + phosphate + H(+). In terms of biological role, GTP hydrolase that promotes the GTP-dependent binding of aminoacyl-tRNA to the A-site of ribosomes during protein biosynthesis. This Emiliania huxleyi (Coccolithophore) protein is Elongation factor Tu, chloroplastic (tufA).